The sequence spans 108 residues: UPF0060 membrane protein YnfA (108 aa).

Residues 1–5 (MLKTT) are Periplasmic-facing. The helical transmembrane segment at 6–26 (LLFFVTALCEIIGCFLPWLWI) threads the bilayer. Residues 27 to 30 (KRGA) lie on the Cytoplasmic side of the membrane. Residues 31–51 (SVWWLLPAAASLALFVWLLTL) traverse the membrane as a helical segment. The Periplasmic segment spans residues 52–60 (HPAASGRVY). The chain crosses the membrane as a helical span at residues 61-81 (AAYGGVYVCTALLWLRVVDGV). The Cytoplasmic segment spans residues 82-84 (RLT). A helical membrane pass occupies residues 85 to 105 (VYDWCGALIALCGMLIIVVGW). Topologically, residues 106-108 (GRT) are periplasmic.

It belongs to the UPF0060 family.

It is found in the cell inner membrane. This chain is UPF0060 membrane protein YnfA, found in Salmonella paratyphi A (strain ATCC 9150 / SARB42).